We begin with the raw amino-acid sequence, 731 residues long: Radial spoke head 10 homolog B (731 aa).

The disordered stretch occupies residues 1 to 69 (MARGDNMKSS…PNENQPIGEH (69 aa)). Polar residues predominate over residues 7 to 17 (MKSSNKSTPEP). Composition is skewed to low complexity over residues 18–36 (TLSKTLVESSTSSLLSESV) and 46–57 (SSSAVCSASTVS). MORN repeat units follow at residues 86-108 (YEGEKCGEMFHGEGVAYFQGGHV), 109-131 (YKGSFSHGLMHGYGEYIWSDGLK), 132-154 (YQGDFKVNVPMGHGTYTWLNGST), 155-177 (YEGEVHQGIRHGVGMYKCVKTLT), 179-201 (YRGQWYLGKRQGQGEMFYNQEAT), 204-226 (YKGEWVNNCREGWGKRCYPSGNV), 227-249 (YEGQWRNNVRHGEGTMRWIDLDQ), 251-273 (YSGQWINGIQEGKGTHTWFRKRA), 284-306 (YTGDFVQAMRHGQGQFLYASGAL), and 307-329 (YCGQWKYDKKHGQGRYIFENGRV). Disordered stretches follow at residues 353 to 377 (TTPFPDENDSSKGASQSSSNASPLG) and 709 to 731 (KQEQDADGNELCPVTTTSVTSIH). A compositionally biased stretch (low complexity) spans 363 to 377 (SKGASQSSSNASPLG). The span at 722 to 731 (VTTTSVTSIH) shows a compositional bias: polar residues.

The protein resides in the cytoplasm. The protein localises to the cytoskeleton. It is found in the cilium axoneme. Its subcellular location is the cell projection. It localises to the cilium. The protein resides in the flagellum. In terms of biological role, may function as part of axonemal radial spoke complexes. Radial spoke complexes are important for ciliary motility. In Danio rerio (Zebrafish), this protein is Radial spoke head 10 homolog B (rsph10b).